The following is a 391-amino-acid chain: ATP phosphoribosyltransferase regulatory subunit (391 aa).

It belongs to the class-II aminoacyl-tRNA synthetase family. HisZ subfamily. In terms of assembly, heteromultimer composed of HisG and HisZ subunits.

The protein localises to the cytoplasm. The protein operates within amino-acid biosynthesis; L-histidine biosynthesis; L-histidine from 5-phospho-alpha-D-ribose 1-diphosphate: step 1/9. Functionally, required for the first step of histidine biosynthesis. May allow the feedback regulation of ATP phosphoribosyltransferase activity by histidine. The sequence is that of ATP phosphoribosyltransferase regulatory subunit from Prochlorococcus marinus (strain NATL2A).